We begin with the raw amino-acid sequence, 398 residues long: Lysophosphatidylserine lipase ABHD12 (398 aa).

The segment covering 1-16 has biased composition (basic and acidic residues); it reads MRKRTEPVALEHERRT. Residues 1–24 are disordered; the sequence is MRKRTEPVALEHERRTASGSPSAG. Over 1 to 74 the chain is Cytoplasmic; it reads MRKRTEPVAL…RKGLCFRLRK (74 aa). Residues 75-95 form a helical membrane-spanning segment; it reads ILFFVLGLYVAIPFLIKLCPG. The Extracellular segment spans residues 96 to 398; it reads IQAKLIFLNF…LGKSEPGRQH (303 aa). Asparagine 123 carries an N-linked (GlcNAc...) asparagine glycan. Serine 246 (nucleophile) is an active-site residue. Residues aspartate 333 and histidine 372 each act as charge relay system in the active site.

This sequence belongs to the serine esterase family.

The protein resides in the endoplasmic reticulum membrane. It carries out the reaction 1-(9Z-octadecenoyl)-sn-glycero-3-phospho-L-serine + H2O = sn-glycero-3-phospho-L-serine + (9Z)-octadecenoate + H(+). The catalysed reaction is 1-(9Z-octadecenoyl)-sn-glycero-3-phospho-(1'-sn-glycerol) + H2O = sn-glycero-3-phospho-(1'-sn-glycerol) + (9Z)-octadecenoate + H(+). The enzyme catalyses 1-(9Z-octadecenoyl)-sn-glycero-3-phospho-(1D-myo-inositol) + H2O = sn-glycero-3-phospho-1D-myo-inositol + (9Z)-octadecenoate + H(+). It catalyses the reaction 1-(9Z-octadecenoyl)-sn-glycero-3-phosphoethanolamine + H2O = sn-glycero-3-phosphoethanolamine + (9Z)-octadecenoate + H(+). It carries out the reaction 1-(9Z-octadecenoyl)-sn-glycero-3-phosphocholine + H2O = 1-(9Z-octadecenoyl)-sn-glycerol + phosphocholine + H(+). The catalysed reaction is 2-(9Z-octadecenoyl)-glycerol + H2O = glycerol + (9Z)-octadecenoate + H(+). The enzyme catalyses 1-hexadecanoyl-sn-glycero-3-phospho-L-serine + H2O = sn-glycero-3-phospho-L-serine + hexadecanoate + H(+). It catalyses the reaction 2-(5Z,8Z,11Z,14Z-eicosatetraenoyl)-glycerol + H2O = glycerol + (5Z,8Z,11Z,14Z)-eicosatetraenoate + H(+). It carries out the reaction Hydrolyzes glycerol monoesters of long-chain fatty acids.. The catalysed reaction is 1-decanoylglycerol + H2O = decanoate + glycerol + H(+). The enzyme catalyses 1-dodecanoylglycerol + H2O = dodecanoate + glycerol + H(+). It catalyses the reaction 1-tetradecanoylglycerol + H2O = tetradecanoate + glycerol + H(+). It carries out the reaction 2-hexadecanoylglycerol + H2O = glycerol + hexadecanoate + H(+). The catalysed reaction is 1-(9Z-octadecenoyl)-glycerol + H2O = glycerol + (9Z)-octadecenoate + H(+). The enzyme catalyses 2-(9Z,12Z-octadecadienoyl)-glycerol + H2O = (9Z,12Z)-octadecadienoate + glycerol + H(+). It catalyses the reaction 1-(5Z,8Z,11Z,14Z-eicosatetraenoyl)-glycerol + H2O = glycerol + (5Z,8Z,11Z,14Z)-eicosatetraenoate + H(+). It carries out the reaction 1-(9Z,12Z-octadecadienoyl)-glycerol + H2O = (9Z,12Z)-octadecadienoate + glycerol + H(+). The catalysed reaction is 1-hexadecanoylglycerol + H2O = glycerol + hexadecanoate + H(+). The enzyme catalyses 1-octadecanoylglycerol + H2O = octadecanoate + glycerol + H(+). It catalyses the reaction 1-octadecanoyl-2-(9,10-epoxyoctadecanoyl)-sn-glycero-3-phospho-L-serine + H2O = 9,10-epoxyoctadecanoate + 1-octadecanoyl-sn-glycero-3-phosphoserine + H(+). It carries out the reaction 1-octadecanoyl-2-(10-hydroxyoctadecanoyl)-sn-glycero-3-phospho-L-serine + H2O = 1-octadecanoyl-sn-glycero-3-phosphoserine + 10-hydroxyoctadecanoate + H(+). The catalysed reaction is 1-hexadecanoyl-2-(10-hydroxyoctadecanoyl)-sn-glycero-3-phospho-L-serine + H2O = 10-hydroxyoctadecanoate + 1-hexadecanoyl-sn-glycero-3-phospho-L-serine + H(+). Functionally, lysophosphatidylserine (LPS) lipase that mediates the hydrolysis of lysophosphatidylserine, a class of signaling lipids that regulates immunological and neurological processes. Represents a major lysophosphatidylserine lipase in the brain, thereby playing a key role in the central nervous system. Also able to hydrolyze oxidized phosphatidylserine; oxidized phosphatidylserine is produced in response to severe inflammatory stress and constitutes a proapoptotic 'eat me' signal. Also has monoacylglycerol (MAG) lipase activity: hydrolyzes 2-arachidonoylglycerol (2-AG), thereby acting as a regulator of endocannabinoid signaling pathways. Has a strong preference for very-long-chain lipid substrates; substrate specificity is likely due to improved catalysis and not improved substrate binding. This Bos taurus (Bovine) protein is Lysophosphatidylserine lipase ABHD12.